The following is a 294-amino-acid chain: ATP synthase gamma chain (294 aa).

It belongs to the ATPase gamma chain family. As to quaternary structure, F-type ATPases have 2 components, CF(1) - the catalytic core - and CF(0) - the membrane proton channel. CF(1) has five subunits: alpha(3), beta(3), gamma(1), delta(1), epsilon(1). CF(0) has three main subunits: a, b and c.

It is found in the cell inner membrane. In terms of biological role, produces ATP from ADP in the presence of a proton gradient across the membrane. The gamma chain is believed to be important in regulating ATPase activity and the flow of protons through the CF(0) complex. In Rhizobium rhizogenes (strain K84 / ATCC BAA-868) (Agrobacterium radiobacter), this protein is ATP synthase gamma chain.